A 302-amino-acid chain; its full sequence is MSNTTFRPFTGSSRTVVEGEQAGAQDDMSLLQSLFSDKSREEFAKECKLGMYTNLSSNNRLNYIDLVPKNTGSRALNLFKSEYEKGHIPSSGVLSIPRVLVFLVRTTTVTESGSVTIRLVDLISASSVEILEPVDGTQEATIPISSLPAIVCFSPSYDCPMQMIGNRHRCFGLVTQLDGVISSGSTVVMSHAYWSANFRSKPNNYKQYAPMYKYVEPFDRLKRLSRKQLKNYVRGITNQSVNHGYLLGKPLLKTDEQDPEMIVLEEESLTPTDSNGVGKDKIAVTAKSVAGLPTASLSINRR.

This sequence belongs to the bromovirus movement protein family.

Its subcellular location is the host cell junction. It localises to the host plasmodesma. In terms of biological role, transports viral genome to neighboring plant cells directly through plasmosdesmata, without any budding. The movement protein allows efficient cell to cell propagation, by bypassing the host cell wall barrier. Acts by forming a tubular structure at the host plasmodesmata, enlarging it enough to allow free passage of virion capsids. The chain is Movement protein from Glycine max (Soybean).